The following is a 376-amino-acid chain: Mannosyl phosphorylinositol ceramide synthase CSH1 (376 aa).

The next 2 helical transmembrane spans lie at 7-27 (ILII…FDLL) and 274-294 (ILSC…GEFT). A disordered region spans residues 331–351 (NKEKRRNPTRHEYNSRGKRLR). At Ser354 the chain carries Phosphoserine.

Belongs to the glycosyltransferase 32 family. Heterodimer of CSH1 and CSG2.

It is found in the vacuole membrane. The enzyme catalyses a 1D-myo-inositol-1-phospho-N-[(R)-2-hydroxy-very-long-chain fatty acyl]-(R)-4-hydroxysphingoid base + GDP-alpha-D-mannose = an alpha-D-mannosyl-(1&lt;-&gt;6)-1D-myo-inositol-1-phospho-N-[(R)-2-hydroxy-very-long-chain fatty acyl]-(R)-4-hydroxysphingoid base + GDP + H(+). Its function is as follows. Involved in the synthesis of mannosyl phosphorylinositol ceramide. Catalyzes the addition of mannosyl to phosphorylinositol ceramide. The polypeptide is Mannosyl phosphorylinositol ceramide synthase CSH1 (Saccharomyces cerevisiae (strain ATCC 204508 / S288c) (Baker's yeast)).